The following is a 198-amino-acid chain: Charged multivesicular body protein 2a homolog 2 (198 aa).

Residues 11–42 are a coiled coil; the sequence is KEVLRENQRNLNKSMREIDRERVALQNQEKKI.

This sequence belongs to the SNF7 family. In terms of assembly, probable core component of the endosomal sorting required for transport complex III (ESCRT-III). ESCRT-III components are thought to multimerize to form a flat lattice on the perimeter membrane of the endosome.

Its subcellular location is the endosome membrane. Its function is as follows. Probable core component of the endosomal sorting required for transport complex III (ESCRT-III) which is involved in multivesicular bodies (MVBs) formation and sorting of endosomal cargo proteins into MVBs. MVBs contain intraluminal vesicles (ILVs) that are generated by invagination and scission from the limiting membrane of the endosome and are delivered to lysosomes enabling degradation of membrane proteins. The sequence is that of Charged multivesicular body protein 2a homolog 2 (chmp2a2) from Dictyostelium discoideum (Social amoeba).